Consider the following 478-residue polypeptide: Protein MAINTENANCE OF MERISTEMS (478 aa).

The disordered stretch occupies residues 459–478; it reads ASTTNKRKRREEQQQTDWSE. The Nuclear localization signal signature appears at 464–468; the sequence is KRKRR.

As to expression, expressed in root meristem, root vasculature, shoot apical meristem (SAM), leaf vasculature and ovules.

It localises to the nucleus. Its function is as follows. Required for the organization of the root apical meristem (RAM) and the shoot apical meristem (SAM). Required to maintain genome stability and cell division activity in meristematic cells. This is Protein MAINTENANCE OF MERISTEMS from Arabidopsis thaliana (Mouse-ear cress).